A 233-amino-acid chain; its full sequence is Sugar fermentation stimulation protein homolog (233 aa).

The protein belongs to the SfsA family.

This chain is Sugar fermentation stimulation protein homolog, found in Saccharophagus degradans (strain 2-40 / ATCC 43961 / DSM 17024).